We begin with the raw amino-acid sequence, 733 residues long: Ribosomal protein S6 kinase alpha-2 (733 aa).

Positions 59-318 constitute a Protein kinase 1 domain; sequence FELLKVLGQG…VEEIKRHPFF (260 aa). Residues 65–73 and Lys-91 contribute to the ATP site; that span reads LGQGSYGKV. The active-site Proton acceptor is Asp-184. Phosphoserine; by PDPK1 is present on Ser-218. The region spanning 319–388 is the AGC-kinase C-terminal domain; sequence VTIDWNKLYR…VASSLVQEPS (70 aa). Phosphoserine is present on Ser-377. The region spanning 415–672 is the Protein kinase 2 domain; sequence YEIKEDIGVG…AVQVLKHPWI (258 aa). Residues 421-429 and Lys-444 each bind ATP; that span reads IGVGSYSVC. Asp-532 acts as the Proton acceptor in catalysis.

The protein belongs to the protein kinase superfamily. AGC Ser/Thr protein kinase family. S6 kinase subfamily. In terms of assembly, forms a complex with either MAPK1/ERK2 or MAPK3/ERK1 in quiescent cells. Transiently dissociates following mitogenic stimulation. Interacts with FBXO5; cooperate to induce the metaphase arrest of early blastomeres; increases and stabilizes interaction of FBXO5 with CDC20. It depends on Mg(2+) as a cofactor. In terms of processing, activated by phosphorylation at Ser-218 by PDPK1. Autophosphorylated on Ser-377, as part of the activation process. May be phosphorylated at Thr-356 and Ser-360 by MAPK1/ERK2 and MAPK3/ERK1. Post-translationally, N-terminal myristoylation results in an activated kinase in the absence of added growth factors.

The protein localises to the nucleus. It localises to the cytoplasm. It catalyses the reaction L-seryl-[protein] + ATP = O-phospho-L-seryl-[protein] + ADP + H(+). The catalysed reaction is L-threonyl-[protein] + ATP = O-phospho-L-threonyl-[protein] + ADP + H(+). With respect to regulation, upon extracellular signal or mitogen stimulation, phosphorylated at Thr-570 in the C-terminal kinase domain (CTKD) by MAPK1/ERK2 and MAPK3/ERK1. The activated CTKD then autophosphorylates Ser-377, allowing binding of PDPK1, which in turn phosphorylates Ser-218 in the N-terminal kinase domain (NTDK) leading to the full activation of the protein and subsequent phosphorylation of the substrates by the NTKD. Its function is as follows. Serine/threonine-protein kinase that acts downstream of ERK (MAPK1/ERK2 and MAPK3/ERK1) signaling and mediates mitogenic and stress-induced activation of transcription factors, regulates translation, and mediates cellular proliferation, survival, and differentiation. May function as tumor suppressor in epithelial ovarian cancer cells. In Mus musculus (Mouse), this protein is Ribosomal protein S6 kinase alpha-2 (Rps6ka2).